We begin with the raw amino-acid sequence, 318 residues long: MSKSHPRWRLAKKILTWLFFIAVIVLLVVYAKKVDWEEVWKVIRDYNRVALLSAVGLVVVSYLIYGCYDLLARFYCGHKLAKRQVMLVSFICYAFNLTLSTWVGGIGMRYRLYSRLGLPGSTITRIFSLSITTNWLGYILLAGIIFTAGVVELPDHWYVDQTTLRILGIGLLMIIAVYLWFCAFAKHRHMTIKGQKLVLPSWKFALAQMLISSVNWMVMGAIIWLLLGQSVNYFFVLGVLLVSSIAGVIVHIPAGIGVLEAVFIALLAGEHTSKGTIIAALLAYRVLYYFIPLLLALICYLLLESQAKKLRAKNEAAM.

Residues 1–13 lie on the Periplasmic side of the membrane; that stretch reads MSKSHPRWRLAKK. Residues 14 to 34 form a helical membrane-spanning segment; it reads ILTWLFFIAVIVLLVVYAKKV. The Cytoplasmic portion of the chain corresponds to 35 to 50; sequence DWEEVWKVIRDYNRVA. Residues 51 to 71 traverse the membrane as a helical segment; sequence LLSAVGLVVVSYLIYGCYDLL. Residues 72–85 lie on the Periplasmic side of the membrane; it reads ARFYCGHKLAKRQV. The helical transmembrane segment at 86-106 threads the bilayer; sequence MLVSFICYAFNLTLSTWVGGI. Residues 107–125 are Cytoplasmic-facing; sequence GMRYRLYSRLGLPGSTITR. Residues 126 to 146 traverse the membrane as a helical segment; that stretch reads IFSLSITTNWLGYILLAGIIF. Residues 147-165 are Periplasmic-facing; the sequence is TAGVVELPDHWYVDQTTLR. Residues 166–186 traverse the membrane as a helical segment; it reads ILGIGLLMIIAVYLWFCAFAK. Over 187 to 205 the chain is Cytoplasmic; that stretch reads HRHMTIKGQKLVLPSWKFA. Residues 206–226 traverse the membrane as a helical segment; that stretch reads LAQMLISSVNWMVMGAIIWLL. Over 227–233 the chain is Periplasmic; the sequence is LGQSVNY. The next 2 helical transmembrane spans lie at 234–254 and 255–275; these read FFVL…HIPA and GIGV…TSKG. The Periplasmic segment spans residues 276–277; it reads TI. Residues 278–298 traverse the membrane as a helical segment; the sequence is IAALLAYRVLYYFIPLLLALI. Residues 299 to 318 lie on the Cytoplasmic side of the membrane; sequence CYLLLESQAKKLRAKNEAAM.

It to Synechocystis PCC 6803 slr0712.

It is found in the cell inner membrane. The polypeptide is Inner membrane protein YbhN (ybhN) (Escherichia coli (strain K12)).